The following is an 88-amino-acid chain: Antitoxin HipB (88 aa).

The HTH cro/C1-type domain occupies 17-71 (MKLVRQQNGWTQSELAKKIGIKQATISNFENNPDNTTLTTFFKILQSLELSMTLC). Positions 21-47 (RQQNGWTQSELAKKIGIKQATISNFEN) form a DNA-binding region, H-T-H motif.

Homodimer. Binds operator DNA sites in the absence of HipA, inducing a 70 degree bend in consecutive operators and deforming DNA between the operators so that HipB dimers bind on opposite faces of the DNA. Forms a HipA(2)HipB(2) heterotetramer which can interact with a single operator site on DNA, inducing a 70 degree bend. When 2 operators are present each HipB dimer contacts 1 HipA molecule, which are brought together by the DNA bend and dimerize, blocking the HipA active site and inactivating its toxic activity. HipA-HipB-induced bending also distorts the -35 and -10 boxes of the promoter and probably prevents sigma-factor binding, and additionally bound HipB and HipA block RNA polymerase access to the -35 box, thus repressing the operon. This complex also blocks the toxic activity of HipA. Mutations present in allele hipA7 (G22S and D291A) decrease the affinity of HipA for HipB. Post-translationally, degraded by Lon protease in vivo; half-life is 17 minutes in wild-type cells and over 200 minutes in a lon deletion strain. In vitro degradation by Lon is Mg(2+)-ATP-dependent.

With respect to regulation, degraded by Lon protease; degradation is inhibited in a HipA-HipB complex and when bound to the operator consensus sequence dsDNA. Functionally, antitoxin component of a type II toxin-antitoxin (TA) system. Neutralizes the toxic effect of cognate toxin HipA. Also neutralizes the toxic effect of non-cognate toxin YjjJ. Binds to operator sites with the consensus sequence 5-'TATCCN(8)GGATA-3' to repress the hipBA operon promoter; binding of HipB(2) to DNA induces a 70 degree bend. This forces HipA dimerization, which blocks HipA's active site and thus its toxic action. May play a role in biofilm formation. The sequence is that of Antitoxin HipB (hipB) from Escherichia coli (strain K12).